The primary structure comprises 521 residues: Alkyl hydroperoxide reductase subunit F (521 aa).

213–228 (DVLVVGGGPAGAAAAI) provides a ligand contact to FAD. The cysteines at positions 344 and 347 are disulfide-linked. 356–370 (RVAVIGGGNSGVEAA) lines the NAD(+) pocket. 477-487 (TSLPGIFAAGD) provides a ligand contact to FAD.

Belongs to the class-II pyridine nucleotide-disulfide oxidoreductase family. Homodimer. FAD is required as a cofactor.

Functionally, serves to protect the cell against DNA damage by alkyl hydroperoxides. It can use either NADH or NADPH as electron donor for direct reduction of redox dyes or of alkyl hydroperoxides when combined with the AhpC protein. The chain is Alkyl hydroperoxide reductase subunit F (ahpF) from Pseudomonas aeruginosa (strain ATCC 15692 / DSM 22644 / CIP 104116 / JCM 14847 / LMG 12228 / 1C / PRS 101 / PAO1).